The sequence spans 90 residues: Small ribosomal subunit protein uS19 (90 aa).

This sequence belongs to the universal ribosomal protein uS19 family.

Its function is as follows. Protein S19 forms a complex with S13 that binds strongly to the 16S ribosomal RNA. In Methylococcus capsulatus (strain ATCC 33009 / NCIMB 11132 / Bath), this protein is Small ribosomal subunit protein uS19.